Here is a 210-residue protein sequence, read N- to C-terminus: Thymidylate kinase (210 aa).

11–18 contacts ATP; it reads GVDGAGKT.

Belongs to the thymidylate kinase family.

It catalyses the reaction dTMP + ATP = dTDP + ADP. Functionally, phosphorylation of dTMP to form dTDP in both de novo and salvage pathways of dTTP synthesis. The sequence is that of Thymidylate kinase (tmk) from Mycoplasma pneumoniae (strain ATCC 29342 / M129 / Subtype 1) (Mycoplasmoides pneumoniae).